The sequence spans 390 residues: Endoglucanase gh5-1 (390 aa).

An N-terminal signal peptide occupies residues 1–16 (MKATILASTFAAGALA). Positions 17 to 52 (QSGAWGQCGGNGWSGATSCISGYACNYVNDWYSQCQ) constitute a CBM1 domain. 2 N-linked (GlcNAc...) asparagine glycosylation sites follow: N157 and N261.

The protein belongs to the glycosyl hydrolase 5 (cellulase A) family. N-glycosylated.

Its subcellular location is the secreted. The enzyme catalyses Endohydrolysis of (1-&gt;4)-beta-D-glucosidic linkages in cellulose, lichenin and cereal beta-D-glucans.. Its function is as follows. Endoglucanase that plays an important role in biomass degradation. Binds onto plant cell walls to participate in the hydrolysis of cellulose. This Neurospora crassa (strain ATCC 24698 / 74-OR23-1A / CBS 708.71 / DSM 1257 / FGSC 987) protein is Endoglucanase gh5-1.